The following is an 88-amino-acid chain: Actobindin (88 aa).

Residue M1 is modified to N-acetylmethionine. The disordered stretch occupies residues 1–22 (MNPELQSAIGQGAALKHAETVD). K35 is modified (N6,N6,N6-trimethyllysine). The WH2 domain maps to 37–54 (DRSSFLEEVAKPHELKHA). K72 carries the post-translational modification N6,N6,N6-trimethyllysine.

Monomer.

Is able to bind two actin monomers at high concentrations of G-actin. The protein is Actobindin of Acanthamoeba castellanii (Amoeba).